The primary structure comprises 584 residues: A-type ATP synthase subunit A (584 aa).

Residue 233 to 240 coordinates ATP; sequence GPFGSGKT.

The protein belongs to the ATPase alpha/beta chains family. In terms of assembly, has multiple subunits with at least A(3), B(3), C, D, E, F, H, I and proteolipid K(x).

Its subcellular location is the cell membrane. It catalyses the reaction ATP + H2O + 4 H(+)(in) = ADP + phosphate + 5 H(+)(out). In terms of biological role, component of the A-type ATP synthase that produces ATP from ADP in the presence of a proton gradient across the membrane. The A chain is the catalytic subunit. This chain is A-type ATP synthase subunit A, found in Methanothermobacter thermautotrophicus (strain ATCC 29096 / DSM 1053 / JCM 10044 / NBRC 100330 / Delta H) (Methanobacterium thermoautotrophicum).